The primary structure comprises 213 residues: Peptidyl-tRNA hydrolase (213 aa).

Y15 contributes to the tRNA binding site. H20 acts as the Proton acceptor in catalysis. F66, N68, and N114 together coordinate tRNA. The segment at H187–Q213 is disordered. Residues A201–Q213 are compositionally biased toward low complexity.

The protein belongs to the PTH family. In terms of assembly, monomer.

It localises to the cytoplasm. It catalyses the reaction an N-acyl-L-alpha-aminoacyl-tRNA + H2O = an N-acyl-L-amino acid + a tRNA + H(+). In terms of biological role, hydrolyzes ribosome-free peptidyl-tRNAs (with 1 or more amino acids incorporated), which drop off the ribosome during protein synthesis, or as a result of ribosome stalling. Catalyzes the release of premature peptidyl moieties from peptidyl-tRNA molecules trapped in stalled 50S ribosomal subunits, and thus maintains levels of free tRNAs and 50S ribosomes. The chain is Peptidyl-tRNA hydrolase from Paracidovorax citrulli (strain AAC00-1) (Acidovorax citrulli).